The following is a 143-amino-acid chain: Small ribosomal subunit protein uS9 (143 aa).

Residues 118 to 143 (DSRRTEPHKPNRSTKGPRAKRQKSYR) form a disordered region. Positions 127 to 143 (PNRSTKGPRAKRQKSYR) are enriched in basic residues.

It belongs to the universal ribosomal protein uS9 family.

The chain is Small ribosomal subunit protein uS9 from Thermococcus sibiricus (strain DSM 12597 / MM 739).